We begin with the raw amino-acid sequence, 428 residues long: MSAVVKSIKAREILDSRGNPTVEADVVLSDGSFGRAAVPSGASTGSHEAVELRDGDKSRYNGLGVQKAVTNVNTAIAKAISGFKASDQQGLDNLLIELDGTPNKAKLGANAMLATSLAVAHAAAASCHMPLYRYLNNCDEYILPVPMFNILNGGKHASNSTDFQEFMVMPTGAKSFAEALRMGTEVYHSLKKVLKGMNQNTTVGDEGGFAPSLPTNKDAVEVILKAIEKAGYRPGEDIFIALDPASSELYQDGKYTLATENKTLSSAEMVDYWCGWVEKYPIISIEDGLFEDDWDGWKMLTKKIGSKVQLVGDDFYVTNIKRLERGIKENASNSILIKLNQIGTLSETIAAIKMANNSAWTAVVSHRSGETEDTTIADLAVAMNAGQIKTGAPCRAERTAKYNRLLRIEEELGGKAKYPGKEAFFNLK.

A (2R)-2-phosphoglycerate-binding site is contributed by Gln164. The active-site Proton donor is Glu206. Asp243, Glu286, and Asp313 together coordinate Mg(2+). The (2R)-2-phosphoglycerate site is built by Lys338, Arg367, Ser368, and Lys389. The active-site Proton acceptor is Lys338.

It belongs to the enolase family. Mg(2+) is required as a cofactor.

It is found in the cytoplasm. Its subcellular location is the secreted. The protein localises to the cell surface. It catalyses the reaction (2R)-2-phosphoglycerate = phosphoenolpyruvate + H2O. Its pathway is carbohydrate degradation; glycolysis; pyruvate from D-glyceraldehyde 3-phosphate: step 4/5. Its function is as follows. Catalyzes the reversible conversion of 2-phosphoglycerate (2-PG) into phosphoenolpyruvate (PEP). It is essential for the degradation of carbohydrates via glycolysis. The polypeptide is Enolase (Dehalococcoides mccartyi (strain ATCC BAA-2266 / KCTC 15142 / 195) (Dehalococcoides ethenogenes (strain 195))).